The primary structure comprises 185 residues: Large ribosomal subunit protein uL5 (185 aa).

It belongs to the universal ribosomal protein uL5 family. As to quaternary structure, part of the 50S ribosomal subunit; part of the 5S rRNA/L5/L18/L25 subcomplex. Contacts the 5S rRNA and the P site tRNA. Forms a bridge to the 30S subunit in the 70S ribosome.

Its function is as follows. This is one of the proteins that bind and probably mediate the attachment of the 5S RNA into the large ribosomal subunit, where it forms part of the central protuberance. In the 70S ribosome it contacts protein S13 of the 30S subunit (bridge B1b), connecting the 2 subunits; this bridge is implicated in subunit movement. Contacts the P site tRNA; the 5S rRNA and some of its associated proteins might help stabilize positioning of ribosome-bound tRNAs. The polypeptide is Large ribosomal subunit protein uL5 (Nitrobacter hamburgensis (strain DSM 10229 / NCIMB 13809 / X14)).